The sequence spans 122 residues: Probable non-specific lipid-transfer protein 3 (122 aa).

An N-terminal signal peptide occupies residues 1-29 (MARLNSKAVAAAVVLAAVVLMMAGREASA). 4 cysteine pairs are disulfide-bonded: C33–C81, C43–C58, C59–C104, and C79–C118.

This sequence belongs to the plant LTP family. In terms of tissue distribution, expressed in phloem. Also detected in the epidermis near the vascular tissues in resistant plants infected by Hessian fly larvae.

Its function is as follows. Plant non-specific lipid-transfer proteins transfer phospholipids as well as galactolipids across membranes. May play a role in wax or cutin deposition in the cell walls of expanding epidermal cells and certain secretory tissues. The protein is Probable non-specific lipid-transfer protein 3 (LTP3) of Triticum aestivum (Wheat).